The primary structure comprises 360 residues: N6-Methyl-AMP deaminase (360 aa).

The Zn(2+) site is built by histidine 23 and histidine 25. N(6)-methyl-AMP-binding positions include histidine 25, asparagine 27, histidine 73, 105–108 (STPR), aspartate 147, and glycine 180. Position 207 (histidine 207) interacts with Zn(2+). Residues glutamate 210, aspartate 292, and aspartate 293 each contribute to the N(6)-methyl-AMP site. The active-site Proton donor is the glutamate 210. A Zn(2+)-binding site is contributed by aspartate 292.

The protein belongs to the metallo-dependent hydrolases superfamily. Adenosine and AMP deaminases family. As to quaternary structure, monomer. It depends on Zn(2+) as a cofactor.

The catalysed reaction is N(6)-methyl-AMP + H2O + H(+) = IMP + methylamine. Functionally, catalyzes the hydrolysis of the free cytosolic methylated adenosine nucleotide N(6)-methyl-AMP (N6-mAMP) to produce inositol monophosphate (IMP) and methylamine. Is required for the catabolism of cytosolic N6-mAMP, which is derived from the degradation of mRNA containing N6-methylated adenine (m6A). The chain is N6-Methyl-AMP deaminase (Mapda) from Mus musculus (Mouse).